Consider the following 176-residue polypeptide: Bifunctional protein PyrR (176 aa).

The PRPP-binding motif lies at 93-105 (VILVDDVLYTGRT).

The protein belongs to the purine/pyrimidine phosphoribosyltransferase family. PyrR subfamily. As to quaternary structure, homodimer and homohexamer; in equilibrium.

The enzyme catalyses UMP + diphosphate = 5-phospho-alpha-D-ribose 1-diphosphate + uracil. In terms of biological role, regulates transcriptional attenuation of the pyrimidine nucleotide (pyr) operon by binding in a uridine-dependent manner to specific sites on pyr mRNA. This disrupts an antiterminator hairpin in the RNA and favors formation of a downstream transcription terminator, leading to a reduced expression of downstream genes. Also displays a weak uracil phosphoribosyltransferase activity which is not physiologically significant. This is Bifunctional protein PyrR from Streptococcus mutans serotype c (strain ATCC 700610 / UA159).